The primary structure comprises 164 residues: ATP synthase subunit b (164 aa).

Residues 10–30 (LLISQIVNFCLLAFLLNTFLY) traverse the membrane as a helical segment.

The protein belongs to the ATPase B chain family. As to quaternary structure, F-type ATPases have 2 components, F(1) - the catalytic core - and F(0) - the membrane proton channel. F(1) has five subunits: alpha(3), beta(3), gamma(1), delta(1), epsilon(1). F(0) has three main subunits: a(1), b(2) and c(10-14). The alpha and beta chains form an alternating ring which encloses part of the gamma chain. F(1) is attached to F(0) by a central stalk formed by the gamma and epsilon chains, while a peripheral stalk is formed by the delta and b chains.

It is found in the cell membrane. F(1)F(0) ATP synthase produces ATP from ADP in the presence of a proton or sodium gradient. F-type ATPases consist of two structural domains, F(1) containing the extramembraneous catalytic core and F(0) containing the membrane proton channel, linked together by a central stalk and a peripheral stalk. During catalysis, ATP synthesis in the catalytic domain of F(1) is coupled via a rotary mechanism of the central stalk subunits to proton translocation. In terms of biological role, component of the F(0) channel, it forms part of the peripheral stalk, linking F(1) to F(0). This Herpetosiphon aurantiacus (strain ATCC 23779 / DSM 785 / 114-95) protein is ATP synthase subunit b.